The primary structure comprises 133 residues: MSTEGPSLASSPAISPLAFLSAPVTPGTLAEATDPLPMLIALACIFLLLATCLLFMTLCKPAALDPSRRRAHECMPHHPGSPSEPQLRLWKRLGSLRLSLHSFRHGRPTVPRQPLPGPEDNRSHCDYMESTKM.

The helical transmembrane segment at 36-56 threads the bilayer; the sequence is LPMLIALACIFLLLATCLLFM. The segment at 105–133 is disordered; it reads HGRPTVPRQPLPGPEDNRSHCDYMESTKM. The span at 119–133 shows a compositional bias: basic and acidic residues; it reads EDNRSHCDYMESTKM.

It is found in the membrane. This is an uncharacterized protein from Homo sapiens (Human).